The sequence spans 187 residues: Aspartic protease inhibitor 9 (187 aa).

Asn-19 carries N-linked (GlcNAc...) asparagine glycosylation. Cystine bridges form between Cys-48–Cys-93 and Cys-142–Cys-158.

The protein belongs to the protease inhibitor I3 (leguminous Kunitz-type inhibitor) family. In terms of processing, glycosylated. As to expression, tubers.

It localises to the vacuole. In terms of biological role, inhibitor of cathepsin D (aspartic protease) and trypsin (serine protease). May protect the plant by inhibiting proteases of invading organisms. The sequence is that of Aspartic protease inhibitor 9 from Solanum tuberosum (Potato).